The primary structure comprises 580 residues: MRGGHKGGRCACPRVIRKVLAKCGCCFARGGRESYSIAGSEGSISASAASGLAAPSGPSSGLSSGPCSPGPPGPVSGLRRWLDHSKHCLSVETEADSGQAGPYENWMLEPALATGEELPELTLLTTLLEGPGDKTQPPEEETLSQAPESEEEQKKKALERSMYVLSELVETEKMYVDDLGQIVEGYMATMAAQGVPESLRGRDRIVFGNIQQIYEWHRDYFLQELQRCLKDPDWLAQLFIKHERRLHMYVVYCQNKPKSEHVVSEFGDSYFEELRQQLGHRLQLNDLLIKPVQRIMKYQLLLKDFLKYYNRAGMDTADLEQAVEVMCFVPKRCNDMMTLGRLRGFEGKLTAQGKLLGQDTFWVTEPEAGGLLSSRGRERRVFLFEQIIIFSEALGGGVRGGTQPGYVYKNSIKVSCLGLEGNLQGDPCRFALTSRGPEGGIQRYVLQAADPAISQAWIKHVAQILESQRDFLNALQSPIEYQRRESQTNSLGRPRGPGVGSPGRIQLGDQAQGSTHTPINGSLPSLLLSPKGEVARALLPLDKQALGDIPQAPHDSPPVSPTPKTPPCQARLAKLDEDEL.

A compositionally biased stretch (low complexity) spans 48–67 (AASGLAAPSGPSSGLSSGPC). Disordered stretches follow at residues 48–76 (AASG…GPVS) and 128–157 (LEGP…KKKA). One can recognise a DH domain in the interval 160–336 (RSMYVLSELV…CFVPKRCNDM (177 aa)). Positions 278–299 (LGHRLQLNDLLIKPVQRIMKYQ) are important for binding to Rho GTPases. One can recognise a PH domain in the interval 348–466 (KLTAQGKLLG…WIKHVAQILE (119 aa)). The interval 467–493 (SQRDFLNALQSPIEYQRRESQTNSLGR) is sufficient to bind activated GNAQ. Disordered regions lie at residues 482 to 524 (QRRE…GSLP) and 545 to 580 (ALGD…EDEL). Positions 509-520 (DQAQGSTHTPIN) are enriched in polar residues. A compositionally biased stretch (pro residues) spans 555-566 (DSPPVSPTPKTP).

Interacts (via the DH domain) with POPDC1 (via the C-terminus cytoplasmic tail). Interacts with activated GNAQ and GNA11. Interacts with RHOA, CDC42 and RAC1. Isoform 1 and isoform 2 are highly expressed in excitable tissues, such as brain, heart and muscle. Also detected in kidney and liver.

The protein resides in the cell membrane. It localises to the cytoplasm. The protein localises to the myofibril. Its subcellular location is the sarcomere. Its function is as follows. May play a role in actin cytoskeleton reorganization in different tissues since its activation induces formation of actin stress fibers. It works as a guanine nucleotide exchange factor for Rho family of small GTPases. Links specifically G alpha q/11-coupled receptors to RHOA activation. May be an important regulator of processes involved in axon and dendrite formation. In neurons seems to be an exchange factor primarily for RAC1. Involved in skeletal myogenesis. The protein is Rho guanine nucleotide exchange factor 25 (ARHGEF25) of Homo sapiens (Human).